The chain runs to 665 residues: Long chain acyl-CoA synthetase 3 (665 aa).

228–239 (IMYTSGTTGDPK) contacts ATP. Residues 495 to 519 (DGWLHTGDVGEWQPDGAMKIIDRKK) are fatty acid-binding.

It belongs to the ATP-dependent AMP-binding enzyme family. The cofactor is Mg(2+).

It carries out the reaction a long-chain fatty acid + ATP + CoA = a long-chain fatty acyl-CoA + AMP + diphosphate. The protein operates within lipid metabolism; fatty acid metabolism. In terms of biological role, activation of long-chain fatty acids for both synthesis of cellular lipids, and degradation via beta-oxidation. Preferentially uses palmitate, palmitoleate, oleate and linoleate. This chain is Long chain acyl-CoA synthetase 3 (LACS3), found in Arabidopsis thaliana (Mouse-ear cress).